Consider the following 1481-residue polypeptide: Coiled-coil domain-containing protein 88B (1481 aa).

Coiled coils occupy residues 200–225 (ELVA…RERD) and 258–491 (SHHL…GSQH). Disordered regions lie at residues 430–458 (ELQR…QDEV), 494–731 (LEEQ…AIPE), and 1331–1481 (PRRE…SLSQ). S441 bears the Phosphoserine mark. Polar residues-rich tracts occupy residues 542–557 (ASYS…SQAP) and 568–590 (QMVS…TVET). S649 is modified (phosphoserine). Residues 660–695 (TLREPLKDQKALDRELELSKQQKETGRHEQRPKGLE) are compositionally biased toward basic and acidic residues. A coiled-coil region spans residues 731 to 1308 (EEQALRDEVA…KIMDQYRVLE (578 aa)). Phosphoserine occurs at positions 1353 and 1384. Positions 1371–1386 (TGSSSPAPMRRVQSSL) are enriched in polar residues. Over residues 1453-1472 (LSEHEADDTREAFQEQKPEK) the composition is skewed to basic and acidic residues.

It belongs to the CCDC88 family. As to quaternary structure, homodimer. Interacts with DOCK8. Interacts (via C-terminus) with intact microtubules. Interacts with dynein-dynactin motor complex. Interacts (via C-terminus) with HSPA5. Abundantly expressed in immune cells, including both CD4(+) and CD8(+) T-cells and in myeloid cells (at protein level). Expressed in endothelium (at protein level). Expressed specifically in spleen, bone marrow, lymph nodes and thymus. Expressed in liver and heart.

The protein localises to the membrane. Its subcellular location is the cytoplasm. It is found in the cytoskeleton. The protein resides in the microtubule organizing center. It localises to the endoplasmic reticulum. The protein localises to the golgi apparatus. Acts as a positive regulator of T-cell maturation and inflammatory function. Required for several functions of T-cells in both the CD4(+) and the CD8(+) compartments and this includes expression of cell surface markers of activation, proliferation, and cytokine production in response to specific or non-specific stimulation and during the course of infection with the mouse malaria parasite Plasmodium berghei. Enhances NK cell cytotoxicity by positively regulating polarization of microtubule-organizing center (MTOC) to cytotoxic synapse, lytic granule transport along microtubules, and dynein-mediated clustering to MTOC. Interacts with HSPA5 and stabilizes the interaction between HSPA5 and ERN1, leading to suppression of ERN1-induced JNK activation and endoplasmic reticulum stress-induced apoptosis. The protein is Coiled-coil domain-containing protein 88B (Ccdc88b) of Mus musculus (Mouse).